Here is a 241-residue protein sequence, read N- to C-terminus: Nopaline transport system permease protein NocM (241 aa).

One can recognise an ABC transmembrane type-1 domain in the interval 17–215 (VPTTLTLAFI…FITFVVSRLV (199 aa)). 5 consecutive transmembrane segments (helical) span residues 21 to 41 (LTLA…VALM), 52 to 72 (LAYG…MFLI), 95 to 115 (PWFC…SEII), 161 to 181 (VMLI…EVTG), and 191 to 211 (YSPV…TFVV).

This sequence belongs to the binding-protein-dependent transport system permease family. HisMQ subfamily.

Its subcellular location is the cell inner membrane. Functionally, component of the nopaline active transport system probably consisting of four subunits: Q, M, P and T. This system is also capable of transporting octopine provided that catabolic functions are induced with nopaline. This is Nopaline transport system permease protein NocM (nocM) from Agrobacterium fabrum (strain C58 / ATCC 33970) (Agrobacterium tumefaciens (strain C58)).